Here is a 255-residue protein sequence, read N- to C-terminus: Small ribosomal subunit protein eS1B (255 aa).

N-acetylalanine; partial is present on A2. The residue at position 245 (S245) is a Phosphoserine. A Glycyl lysine isopeptide (Lys-Gly) (interchain with G-Cter in ubiquitin) cross-link involves residue K248. T254 is subject to Phosphothreonine.

It belongs to the eukaryotic ribosomal protein eS1 family. Component of the small ribosomal subunit. Mature ribosomes consist of a small (40S) and a large (60S) subunit. The 40S subunit contains about 33 different proteins and 1 molecule of RNA (18S). The 60S subunit contains about 49 different proteins and 3 molecules of RNA (25S, 5.8S and 5S).

The protein localises to the cytoplasm. In Saccharomyces cerevisiae (strain JAY291) (Baker's yeast), this protein is Small ribosomal subunit protein eS1B.